The chain runs to 214 residues: Threonylcarbamoyl-AMP synthase (214 aa).

One can recognise a YrdC-like domain in the interval 9–214 (TDSTIQAATW…GDALTGQVIR (206 aa)).

Belongs to the SUA5 family. TsaC subfamily.

The protein resides in the cytoplasm. The catalysed reaction is L-threonine + hydrogencarbonate + ATP = L-threonylcarbamoyladenylate + diphosphate + H2O. Functionally, required for the formation of a threonylcarbamoyl group on adenosine at position 37 (t(6)A37) in tRNAs that read codons beginning with adenine. Catalyzes the conversion of L-threonine, HCO(3)(-)/CO(2) and ATP to give threonylcarbamoyl-AMP (TC-AMP) as the acyladenylate intermediate, with the release of diphosphate. In Psychrobacter cryohalolentis (strain ATCC BAA-1226 / DSM 17306 / VKM B-2378 / K5), this protein is Threonylcarbamoyl-AMP synthase.